We begin with the raw amino-acid sequence, 143 residues long: D-aminoacyl-tRNA deacylase (143 aa).

Residues 135 to 136 (GP) carry the Gly-cisPro motif, important for rejection of L-amino acids motif.

This sequence belongs to the DTD family. Homodimer.

The protein resides in the cytoplasm. It catalyses the reaction glycyl-tRNA(Ala) + H2O = tRNA(Ala) + glycine + H(+). It carries out the reaction a D-aminoacyl-tRNA + H2O = a tRNA + a D-alpha-amino acid + H(+). An aminoacyl-tRNA editing enzyme that deacylates mischarged D-aminoacyl-tRNAs. Also deacylates mischarged glycyl-tRNA(Ala), protecting cells against glycine mischarging by AlaRS. Acts via tRNA-based rather than protein-based catalysis; rejects L-amino acids rather than detecting D-amino acids in the active site. By recycling D-aminoacyl-tRNA to D-amino acids and free tRNA molecules, this enzyme counteracts the toxicity associated with the formation of D-aminoacyl-tRNA entities in vivo and helps enforce protein L-homochirality. The polypeptide is D-aminoacyl-tRNA deacylase (Mycobacterium bovis (strain BCG / Pasteur 1173P2)).